A 188-amino-acid polypeptide reads, in one-letter code: GTP cyclohydrolase 1 (188 aa).

Cys-78, His-81, and Cys-150 together coordinate Zn(2+).

It belongs to the GTP cyclohydrolase I family. In terms of assembly, toroid-shaped homodecamer, composed of two pentamers of five dimers.

The enzyme catalyses GTP + H2O = 7,8-dihydroneopterin 3'-triphosphate + formate + H(+). It functions in the pathway cofactor biosynthesis; 7,8-dihydroneopterin triphosphate biosynthesis; 7,8-dihydroneopterin triphosphate from GTP: step 1/1. In Halalkalibacterium halodurans (strain ATCC BAA-125 / DSM 18197 / FERM 7344 / JCM 9153 / C-125) (Bacillus halodurans), this protein is GTP cyclohydrolase 1.